Here is a 317-residue protein sequence, read N- to C-terminus: Malate dehydrogenase (317 aa).

NAD(+) is bound by residues 7–13 (GAAGGIG) and D34. 2 residues coordinate substrate: R81 and R87. NAD(+) contacts are provided by residues N94 and 117-119 (VTN). Residues N119 and R153 each contribute to the substrate site. H177 functions as the Proton acceptor in the catalytic mechanism. M231 is an NAD(+) binding site.

Belongs to the LDH/MDH superfamily. MDH type 1 family. Homodimer.

The catalysed reaction is (S)-malate + NAD(+) = oxaloacetate + NADH + H(+). In terms of biological role, catalyzes the reversible oxidation of malate to oxaloacetate. The protein is Malate dehydrogenase of Actinobacillus pleuropneumoniae serotype 7 (strain AP76).